The chain runs to 156 residues: Probable succinate transporter subunit YjjB (156 aa).

A run of 4 helical transmembrane segments spans residues Trp7–Phe27, Phe54–Ile74, Val86–Ile106, and Phe128–Trp148.

This sequence belongs to the ThrE exporter (TC 2.A.79) family. In terms of assembly, the transporter is composed of YjjB and YjjP.

Its subcellular location is the cell inner membrane. Its function is as follows. Involved in succinate export with YjjP. Both proteins are required for export. The chain is Probable succinate transporter subunit YjjB from Pectobacterium atrosepticum (strain SCRI 1043 / ATCC BAA-672) (Erwinia carotovora subsp. atroseptica).